Consider the following 377-residue polypeptide: Putative glutamate--cysteine ligase 2 (377 aa).

Belongs to the glutamate--cysteine ligase type 2 family. YbdK subfamily.

It carries out the reaction L-cysteine + L-glutamate + ATP = gamma-L-glutamyl-L-cysteine + ADP + phosphate + H(+). Its function is as follows. ATP-dependent carboxylate-amine ligase which exhibits weak glutamate--cysteine ligase activity. In Ralstonia pickettii (strain 12J), this protein is Putative glutamate--cysteine ligase 2.